A 300-amino-acid chain; its full sequence is Bidirectional sugar transporter SWEET12 (300 aa).

Topologically, residues 1–4 are extracellular; it reads MVQA. Residues 5–25 form a helical membrane-spanning segment; the sequence is LVFAVGIVGNILSFLVILAPV. One can recognise a MtN3/slv 1 domain in the interval 8–92; it reads AVGIVGNILS…TVYLLYAPRQ (85 aa). Residues 26–38 are Cytoplasmic-facing; the sequence is PTFYRVYKKKSTE. A helical transmembrane segment spans residues 39–61; that stretch reads SFQSVPYAVALLSAMLWLYYALL. Residues 62–67 are Extracellular-facing; that stretch reads TSDLLL. A helical membrane pass occupies residues 68-88; the sequence is LSINSIGCLVESLYLTVYLLY. At 89–99 the chain is on the cytoplasmic side; it reads APRQAMAFTLK. Residues 100-120 traverse the membrane as a helical segment; the sequence is LVCAMNLALFAAVVAALQLLV. Residues 121 to 128 lie on the Extracellular side of the membrane; it reads KATDRRVT. A helical transmembrane segment spans residues 129–149; that stretch reads LAGGIGASFALAVFVAPLTII. Residues 131–213 enclose the MtN3/slv 2 domain; sequence GGIGASFALA…VLYVVYKNPK (83 aa). At 150–162 the chain is on the cytoplasmic side; sequence RQVIRTKSVEFMP. The chain crosses the membrane as a helical span at residues 163–183; sequence FWLSFFLTLSAVVWFFYGLLM. Topologically, residues 184–185 are extracellular; sequence KD. Residues 186–206 form a helical membrane-spanning segment; that stretch reads FFVATPNVLGLLFGLAQMVLY. Over 207 to 300 the chain is Cytoplasmic; the sequence is VVYKNPKKNS…PPALPAVEVA (94 aa). The interval 256-300 is disordered; the sequence is ADLEAAAPATPQRPADDDAIDHRSVVVDIPPPPQPPPALPAVEVA. Positions 269–280 are enriched in basic and acidic residues; the sequence is PADDDAIDHRSV. Positions 284-294 are enriched in pro residues; that stretch reads IPPPPQPPPAL.

It belongs to the SWEET sugar transporter family. Forms homooligomers and/or heterooligomers.

Its subcellular location is the cell membrane. Mediates both low-affinity uptake and efflux of sugar across the plasma membrane. In terms of biological role, confers blight susceptibility. Confers TAL effector-mediated susceptibility to Xanthomonas oryzae pv. oryzae. This chain is Bidirectional sugar transporter SWEET12 (SWEET12), found in Oryza sativa subsp. japonica (Rice).